Reading from the N-terminus, the 372-residue chain is uncharacterized protein (372 aa).

The chain crosses the membrane as a helical span at residues 224-244 (GSTVGVVIGVVIVIFIGFIII). Serine 329 bears the Phosphoserine mark.

The protein resides in the vacuole membrane. This is an uncharacterized protein from Saccharomyces cerevisiae (strain ATCC 204508 / S288c) (Baker's yeast).